A 97-amino-acid chain; its full sequence is Class II hydrophobin 1 (97 aa).

The N-terminal stretch at methionine 1–alanine 16 is a signal peptide. Positions glutamine 17–arginine 22 are excised as a propeptide. Disulfide bonds link cysteine 30–cysteine 79, cysteine 40–cysteine 70, cysteine 41–cysteine 53, and cysteine 80–cysteine 91.

It belongs to the cerato-ulmin hydrophobin family. Homotetramer. Further self-assembles to form highly ordered films at water-air interfaces through intermolecular interactions.

Its subcellular location is the secreted. It is found in the cell wall. Aerial growth, conidiation, and dispersal of filamentous fungi in the environment rely upon a capability of their secreting small amphipathic proteins called hydrophobins (HPBs) with low sequence identity. Class I can self-assemble into an outermost layer of rodlet bundles on aerial cell surfaces, conferring cellular hydrophobicity that supports fungal growth, development and dispersal; whereas Class II form highly ordered films at water-air interfaces through intermolecular interactions but contribute nothing to the rodlet structure. Hbf1 is a class II hydrophobin that has a role in hyphal development and is in particular required for the formation of aerial hyphae. The chain is Class II hydrophobin 1 from Hypocrea jecorina (Trichoderma reesei).